We begin with the raw amino-acid sequence, 94 residues long: Co-chaperonin GroES (94 aa).

A disordered region spans residues 17–53; that stretch reads DSNPNSPIQLPDSAKKKPTKGKVVSVGPGASNSDGKV.

This sequence belongs to the GroES chaperonin family. Heptamer of 7 subunits arranged in a ring. Interacts with the chaperonin GroEL.

The protein resides in the cytoplasm. Together with the chaperonin GroEL, plays an essential role in assisting protein folding. The GroEL-GroES system forms a nano-cage that allows encapsulation of the non-native substrate proteins and provides a physical environment optimized to promote and accelerate protein folding. GroES binds to the apical surface of the GroEL ring, thereby capping the opening of the GroEL channel. This is Co-chaperonin GroES from Anaplasma phagocytophilum (strain HZ).